Here is a 37-residue protein sequence, read N- to C-terminus: Calcitonin gene-related peptide 1 (37 aa).

A disulfide bond links Cys2 and Cys7. Phenylalanine amide is present on Phe37.

The protein belongs to the calcitonin family.

The protein resides in the secreted. Its function is as follows. CGRP1/CALCA is a peptide hormone that induces vasodilation mediated by the CALCRL-RAMP1 receptor complex. Dilates a variety of vessels including the coronary, cerebral and systemic vasculature. Its abundance in the CNS also points toward a neurotransmitter or neuromodulator role. It also elevates platelet cAMP. CGRP1 can also bind and activate CALCR-RAMP1 (AMYR1) receptor complex. In Ovis aries (Sheep), this protein is Calcitonin gene-related peptide 1 (CALCA).